Here is a 395-residue protein sequence, read N- to C-terminus: Elongation factor Tu (395 aa).

In terms of domain architecture, tr-type G spans 6 to 205 (KPHINVGTIG…NALEKIDLPI (200 aa)). Positions 15 to 22 (GHVDHGKT) are G1. Residue 15–22 (GHVDHGKT) participates in GTP binding. Thr-22 is a Mg(2+) binding site. A G2 region spans residues 59-63 (GITIS). Residues 80–83 (DCPG) form a G3 region. GTP contacts are provided by residues 80 to 84 (DCPGH) and 135 to 138 (NKCD). The tract at residues 135–138 (NKCD) is G4. The tract at residues 173–175 (SAV) is G5.

Belongs to the TRAFAC class translation factor GTPase superfamily. Classic translation factor GTPase family. EF-Tu/EF-1A subfamily. Monomer.

The protein localises to the cytoplasm. The enzyme catalyses GTP + H2O = GDP + phosphate + H(+). Its function is as follows. GTP hydrolase that promotes the GTP-dependent binding of aminoacyl-tRNA to the A-site of ribosomes during protein biosynthesis. The protein is Elongation factor Tu of Ehrlichia ruminantium (strain Gardel).